Reading from the N-terminus, the 475-residue chain is Aspartic proteinase 39 (475 aa).

The signal sequence occupies residues 1–23 (MELRRKLCIVVAVFVIVIEFASA). The 349-residue stretch at 74–422 (YFTKIKLGSP…DLDNEVIGWA (349 aa)) folds into the Peptidase A1 domain. D92 is a catalytic residue. 2 N-linked (GlcNAc...) asparagine glycosylation sites follow: N124 and N222. D303 is a catalytic residue. N-linked (GlcNAc...) asparagine glycans are attached at residues N425 and N446. S449 is lipidated: GPI-anchor amidated serine. A propeptide spans 450-475 (APRLLMITKLLTILSPLIVMAFTSLA) (removed in mature form).

Belongs to the peptidase A1 family. In terms of tissue distribution, highly expressed in pollen and pollen tubes. Mostly expressed in inflorescence, flowers and siliques, and barely in leaves and seedlings.

It localises to the cell membrane. The protein localises to the cytoplasm. Its subcellular location is the cytosol. In terms of biological role, displays aspartic proteolytic activity. Together with A36, contributes to pollen and ovule development, including the apical cell wall constitution of the growing pollen tubes. The chain is Aspartic proteinase 39 from Arabidopsis thaliana (Mouse-ear cress).